We begin with the raw amino-acid sequence, 1080 residues long: Putative bifunctional amine oxidase DDB_G0291301 (1080 aa).

The tract at residues 1 to 450 (MREFLKDDYD…TIAKSTVPTN (450 aa)) is putative sarcosine oxidase. Residue 10 to 40 (DVIVCGGGPVGLATAYRCAKAGKKVLCLEKS) coordinates FAD. The disordered stretch occupies residues 445 to 464 (STVPTNQSSNPDGASSTAPT). Positions 450–1080 (NQSSNPDGAS…NTAASIGGLK (631 aa)) are putative L-amino-acid oxidase. The helical transmembrane segment at 508–528 (VGIIGAGMAGLYAAMILQDLG) threads the bilayer. FAD contacts are provided by residues Glu535, Arg544, and 563–564 (GA). Substrate is bound at residue Tyr886. FAD-binding positions include Glu978 and 987 to 990 (VIGS).

The protein in the N-terminal section; belongs to the MSOX/MTOX family. It in the C-terminal section; belongs to the flavin monoamine oxidase family. FAD serves as cofactor.

The protein resides in the membrane. The enzyme catalyses sarcosine + O2 + H2O = formaldehyde + glycine + H2O2. The catalysed reaction is L-pipecolate + O2 = L-1-piperideine-6-carboxylate + H2O2 + H(+). It catalyses the reaction an L-alpha-amino acid + O2 + H2O = a 2-oxocarboxylate + H2O2 + NH4(+). In terms of biological role, catalyzes an oxidative deamination of predominantly hydrophobic and aromatic L-amino acids. Metabolizes sarcosine, L-pipecolic acid and L-proline. This is Putative bifunctional amine oxidase DDB_G0291301 from Dictyostelium discoideum (Social amoeba).